A 636-amino-acid polypeptide reads, in one-letter code: Asparagine synthetase domain-containing protein 1 (636 aa).

The active-site Nucleophile is C2. The 186-residue stretch at 2-187 (CGICCVVALS…ASGIFKMDLR (186 aa)) folds into the Glutamine amidotransferase type-2 domain. The Asparagine synthetase domain maps to 291-607 (QFIDVLDEAV…GLEAASILPK (317 aa)).

The polypeptide is Asparagine synthetase domain-containing protein 1 (ASNSD1) (Gallus gallus (Chicken)).